The primary structure comprises 652 residues: Protein phosphatase Slingshot homolog 3 (652 aa).

A compositionally biased stretch (polar residues) spans 1–16; sequence MALVTVSRSPPASGHS. The disordered stretch occupies residues 1–31; the sequence is MALVTVSRSPPASGHSTPVGPTDRVIRRRGR. An N-acetylalanine modification is found at A2. S9, S37, S85, and S87 each carry phosphoserine. A disordered region spans residues 43–91; sequence GAVLGLQDGGEGNDAAEADPEPMEKPSGEEQPAEDQTDNGQGSQSPWKQ. Positions 80 to 90 are enriched in polar residues; it reads DNGQGSQSPWK. A DEK-C domain is found at 266-321; it reads EQMEQAILAELWQVLDASDLDSVTSKEIRQALELRLGCPLQQYRDFIDNQMLLLMA. Residues 325–466 form the Tyrosine-protein phosphatase domain; the sequence is RASRIFPHLY…LQTYQGILTA (142 aa). C410 serves as the catalytic Phosphocysteine intermediate. Disordered regions lie at residues 484-526, 540-580, and 610-652; these read EPLA…LGLR, LLEP…KGGQ, and RAFQ…EGKA. Residues 540–552 are compositionally biased toward low complexity; it reads LLEPSSEPESTTE. The segment covering 642-652 has biased composition (basic and acidic residues); that stretch reads SVDDSREEGKA.

It belongs to the protein-tyrosine phosphatase family. As to quaternary structure, does not bind to, or colocalize with, filamentous actin.

The protein resides in the cytoplasm. It localises to the cytoskeleton. It is found in the nucleus. It catalyses the reaction O-phospho-L-tyrosyl-[protein] + H2O = L-tyrosyl-[protein] + phosphate. The catalysed reaction is O-phospho-L-seryl-[protein] + H2O = L-seryl-[protein] + phosphate. The enzyme catalyses O-phospho-L-threonyl-[protein] + H2O = L-threonyl-[protein] + phosphate. Functionally, protein phosphatase which may play a role in the regulation of actin filament dynamics. Can dephosphorylate and activate the actin binding/depolymerizing factor cofilin, which subsequently binds to actin filaments and stimulates their disassembly. The polypeptide is Protein phosphatase Slingshot homolog 3 (Ssh3) (Rattus norvegicus (Rat)).